We begin with the raw amino-acid sequence, 330 residues long: MGGKGVMMVAILCLWALSATSEAVTEAEPGLMMNFYKDTCPQAEDIVREQVKLLYKRHKNTAFSWLRNIFHDCAVESCDASLLLDSTRRELGEKEHDRSFGLRNFRYIEEIKEALERECPGVVSCSDILVLSAREGIEAVGGPYIPLKTGRRDGLKSRTDMLESYLPDHNESISVVLEKFKSIGIDTPGLVALLGSHSVGRTHCVKLVHRLYPEVDPSLNPDHVPHMLHKCPDSIPDPKAVQYVRNDRGTPMVLDNNYYRNILDNKGLLLVDHQLAHDKRTRPIVKKMAKDQAYFFKEFTRAIQILSENNPLTGSKGEIRKQCNLANKNH.

A signal peptide spans 1–23 (MGGKGVMMVAILCLWALSATSEA). 4 cysteine pairs are disulfide-bonded: Cys-40–Cys-119, Cys-73–Cys-78, Cys-125–Cys-323, and Cys-204–Cys-231. The Proton acceptor role is filled by His-71. Residues Asp-72, Val-75, Asp-79, and Ser-81 each coordinate Ca(2+). Pro-167 serves as a coordination point for substrate. Asn-170 carries an N-linked (GlcNAc...) asparagine glycan. His-197 serves as a coordination point for heme b. A Ca(2+)-binding site is contributed by Ser-198. Residues Asp-247, Thr-250, and Asp-255 each coordinate Ca(2+).

Belongs to the peroxidase family. Classical plant (class III) peroxidase subfamily. Requires heme b as cofactor. Ca(2+) serves as cofactor. As to expression, constitutively expressed in the whole plant, with the highest expression in roots.

Its subcellular location is the secreted. The catalysed reaction is 2 a phenolic donor + H2O2 = 2 a phenolic radical donor + 2 H2O. In terms of biological role, removal of H(2)O(2), oxidation of toxic reductants, biosynthesis and degradation of lignin, suberization, auxin catabolism, response to environmental stresses such as wounding, pathogen attack and oxidative stress. These functions might be dependent on each isozyme/isoform in each plant tissue. Functionally, might function as heat shock-like defense protein. This is Peroxidase 42 (PER42) from Arabidopsis thaliana (Mouse-ear cress).